We begin with the raw amino-acid sequence, 56 residues long: Large ribosomal subunit protein bL33 (56 aa).

It belongs to the bacterial ribosomal protein bL33 family.

The protein is Large ribosomal subunit protein bL33 of Anaplasma phagocytophilum (strain HZ).